A 279-amino-acid polypeptide reads, in one-letter code: Bifunctional protein FolD (279 aa).

NADP(+) contacts are provided by residues 165-167, serine 190, and isoleucine 231; that span reads GRS.

The protein belongs to the tetrahydrofolate dehydrogenase/cyclohydrolase family. In terms of assembly, homodimer.

The catalysed reaction is (6R)-5,10-methylene-5,6,7,8-tetrahydrofolate + NADP(+) = (6R)-5,10-methenyltetrahydrofolate + NADPH. It catalyses the reaction (6R)-5,10-methenyltetrahydrofolate + H2O = (6R)-10-formyltetrahydrofolate + H(+). It participates in one-carbon metabolism; tetrahydrofolate interconversion. Its function is as follows. Catalyzes the oxidation of 5,10-methylenetetrahydrofolate to 5,10-methenyltetrahydrofolate and then the hydrolysis of 5,10-methenyltetrahydrofolate to 10-formyltetrahydrofolate. In Halalkalibacterium halodurans (strain ATCC BAA-125 / DSM 18197 / FERM 7344 / JCM 9153 / C-125) (Bacillus halodurans), this protein is Bifunctional protein FolD.